A 662-amino-acid polypeptide reads, in one-letter code: DNA ligase (662 aa).

NAD(+)-binding positions include 34–38, 83–84, and glutamate 113; these read DYDYD and SI. Lysine 115 serves as the catalytic N6-AMP-lysine intermediate. NAD(+) is bound by residues arginine 136, glutamate 172, lysine 286, and lysine 310. Positions 404, 407, 422, and 427 each coordinate Zn(2+). Positions 583–662 constitute a BRCT domain; the sequence is RASASCQGKT…SDLLKILYPN (80 aa).

It belongs to the NAD-dependent DNA ligase family. LigA subfamily. Requires Mg(2+) as cofactor. Mn(2+) is required as a cofactor.

The catalysed reaction is NAD(+) + (deoxyribonucleotide)n-3'-hydroxyl + 5'-phospho-(deoxyribonucleotide)m = (deoxyribonucleotide)n+m + AMP + beta-nicotinamide D-nucleotide.. Functionally, DNA ligase that catalyzes the formation of phosphodiester linkages between 5'-phosphoryl and 3'-hydroxyl groups in double-stranded DNA using NAD as a coenzyme and as the energy source for the reaction. It is essential for DNA replication and repair of damaged DNA. The chain is DNA ligase from Chlamydia felis (strain Fe/C-56) (Chlamydophila felis).